The sequence spans 157 residues: Arginine repressor (157 aa).

The protein belongs to the ArgR family.

It localises to the cytoplasm. It functions in the pathway amino-acid biosynthesis; L-arginine biosynthesis [regulation]. Regulates arginine biosynthesis genes. This Deinococcus radiodurans (strain ATCC 13939 / DSM 20539 / JCM 16871 / CCUG 27074 / LMG 4051 / NBRC 15346 / NCIMB 9279 / VKM B-1422 / R1) protein is Arginine repressor.